The sequence spans 249 residues: Isoprenyl transferase (249 aa).

The active site involves Asp-29. Asp-29 contacts Mg(2+). Residues 30–33, Trp-34, Arg-42, His-46, and 74–76 contribute to the substrate site; these read GNGR and STE. The active-site Proton acceptor is Asn-77. Substrate-binding positions include Trp-78, Arg-80, Arg-197, and 203-205; that span reads RLS. Glu-216 contributes to the Mg(2+) binding site.

The protein belongs to the UPP synthase family. In terms of assembly, homodimer. Mg(2+) is required as a cofactor.

Functionally, catalyzes the condensation of isopentenyl diphosphate (IPP) with allylic pyrophosphates generating different type of terpenoids. The sequence is that of Isoprenyl transferase from Gloeobacter violaceus (strain ATCC 29082 / PCC 7421).